Consider the following 1374-residue polypeptide: Y' element ATP-dependent helicase YLL067C (1374 aa).

The interval A321–K345 is disordered. The 178-residue stretch at E375–A552 folds into the Helicase ATP-binding domain. A388–T395 contributes to the ATP binding site. The DEAH box motif lies at D498–H501. Residues K609–G758 form the Helicase C-terminal domain. The segment covering A832–S1011 has biased composition (low complexity). Residues A832 to K1035 are disordered. A compositionally biased stretch (basic and acidic residues) spans A1012–K1035.

The protein belongs to the helicase family. Yeast subtelomeric Y' repeat subfamily.

Its function is as follows. Catalyzes DNA unwinding and is involved in telomerase-independent telomere maintenance. The sequence is that of Y' element ATP-dependent helicase YLL067C from Saccharomyces cerevisiae (strain ATCC 204508 / S288c) (Baker's yeast).